Consider the following 651-residue polypeptide: Probable potassium transport system protein Kup (651 aa).

12 helical membrane passes run 41 to 61, 82 to 102, 130 to 150, 163 to 183, 194 to 214, 235 to 255, 276 to 296, 309 to 329, 366 to 386, 395 to 415, 426 to 446, and 450 to 470; these read LVLG…IYAF, VVSL…VLFV, LILG…VITP, IVAP…LVTL, VAIV…ASGL, FLMI…LAMT, WLWI…AFIL, MMPS…TVIA, IYIP…VLGF, AYGI…YIVM, ALPI…ANII, and EGGW…WTWV.

It belongs to the HAK/KUP transporter (TC 2.A.72) family.

It localises to the cell inner membrane. The catalysed reaction is K(+)(in) + H(+)(in) = K(+)(out) + H(+)(out). Its function is as follows. Transport of potassium into the cell. Likely operates as a K(+):H(+) symporter. This chain is Probable potassium transport system protein Kup, found in Brucella anthropi (strain ATCC 49188 / DSM 6882 / CCUG 24695 / JCM 21032 / LMG 3331 / NBRC 15819 / NCTC 12168 / Alc 37) (Ochrobactrum anthropi).